Here is a 59-residue protein sequence, read N- to C-terminus: Large ribosomal subunit protein bL32 (59 aa).

Positions 1–59 (MAVQQNRKTPSKRGMRRSHDSLSKPTLSTEQNTGETHRRHHISADGYYRGRKVTRGQDD) are disordered. Residues 23 to 34 (SKPTLSTEQNTG) show a composition bias toward polar residues. Basic residues predominate over residues 49–59 (RGRKVTRGQDD).

This sequence belongs to the bacterial ribosomal protein bL32 family.

This Halorhodospira halophila (strain DSM 244 / SL1) (Ectothiorhodospira halophila (strain DSM 244 / SL1)) protein is Large ribosomal subunit protein bL32.